A 605-amino-acid chain; its full sequence is Acetoin dehydrogenase operon transcriptional activator AcoR (605 aa).

The Sigma-54 factor interaction domain occupies 295–520 (VIGQSGRSQA…LFNVFERLSI (226 aa)). Residues 323-330 (GETGTGKE) and 387-396 (ANQGTLFLDE) each bind ATP. The H-T-H motif DNA-binding region spans 578–597 (VSQAAKISGIPRSTFYKRLK).

Functionally, acts as a transcriptional activator of the acoABCL operon encoding the acetoin dehydrogenase complex. The polypeptide is Acetoin dehydrogenase operon transcriptional activator AcoR (acoR) (Bacillus subtilis (strain 168)).